A 1208-amino-acid polypeptide reads, in one-letter code: Transient receptor potential cation channel subfamily M member 4 (1208 aa).

Residues 1–776 (MVGQEKEQSW…SYFWGAPVTA (776 aa)) lie on the Cytoplasmic side of the membrane. Residues arginine 172, arginine 215, and leucine 226 each coordinate ATP. Positions 271, 393, 396, and 397 each coordinate Ca(2+). Arginine 422 and glycine 449 together coordinate ATP. Phosphoserine occurs at positions 527 and 538. The helical transmembrane segment at 777–797 (FLGNVVSYLLFLLLFAHVLLV) threads the bilayer. The Extracellular portion of the chain corresponds to 798 to 808 (DFQPTKPGVFE). Residues 809 to 829 (LLLYFWAFTLLCEELRQGLGG) traverse the membrane as a helical segment. 2 residues coordinate Ca(2+): glutamate 822 and glutamine 825. Topologically, residues 830-857 (GWGTLANGGPGPGKAPLRHRLHLYLLDT) are cytoplasmic. Residues 858-878 (WNQCDLLALTCFLLGVGCRLT) traverse the membrane as a helical segment. Ca(2+) is bound by residues asparagine 859 and aspartate 862. The Extracellular portion of the chain corresponds to 879–880 (PG). The chain crosses the membrane as a helical span at residues 881–904 (LFDLGRTVLCLDFMIFTLRLLHIF). The Cytoplasmic segment spans residues 905–924 (TVNKQLGPKIVIVSKMMKDV). The chain crosses the membrane as a helical span at residues 925–945 (FFFLFFLCVWLVAYGVATEGI). The Extracellular portion of the chain corresponds to 946 to 957 (LRPQDRSLPSIL). An intramembrane region (pore-forming) is located at residues 958-978 (RRVFYRPYLQIFGQIPQEEMD). A Selectivity filter motif is present at residues 969-971 (FGQ). The Extracellular portion of the chain corresponds to 979–1013 (VALMNPSNCSAERGSWAHPEGPVAGSCVSQYANWL). Cysteine 987 and cysteine 1005 are joined by a disulfide. Residues 1014–1034 (VVLLLIVFLLVANILLLNLLI) traverse the membrane as a helical segment. Residues 1035-1208 (AMFSYTFNKV…PPPSPTGSKD (174 aa)) lie on the Cytoplasmic side of the membrane. The interval 1070-1170 (APPLIIISHL…EYDRRLRGLE (101 aa)) is calmodulin-binding. The stretch at 1128-1180 (LAQARDKRDSDSERLKRTSQKVDTALKQLGQIREYDRRLRGLEREVQHCSRVL) forms a coiled coil. The interval 1130–1135 (QARDKR) is mediates modulation by decavanadate and PIP2-binding. A phosphoserine; by PKC mark is found at serine 1139 and serine 1146. A disordered region spans residues 1189-1208 (HSALLPPGGPPPPSPTGSKD). Residues 1195-1208 (PGGPPPPSPTGSKD) show a composition bias toward pro residues.

The protein belongs to the transient receptor (TC 1.A.4) family. LTrpC subfamily. TRPM4 sub-subfamily. As to quaternary structure, homotetramer. In terms of processing, phosphorylation by PKC leads to increase the sensitivity to Ca(2+). Post-translationally, sumoylated. Desumoylated by SENP1. As to expression, isoform 1 is highly expressed in the testis with a moderate expression in the brain, spleen and thymus. Isoform 2 is only expressed in the brain and spleen.

It is found in the cell membrane. The protein localises to the endoplasmic reticulum. Its subcellular location is the golgi apparatus. The catalysed reaction is Na(+)(in) = Na(+)(out). It catalyses the reaction K(+)(in) = K(+)(out). With respect to regulation, gating is voltage-dependent and repressed by decavanadate. Calmodulin-binding confers the Ca(2+) sensitivity. ATP is able to restore Ca(2+) sensitivity after desensitization. Phosphatidylinositol 4,5-bisphosphate (PIP2)-binding strongly enhances activity, by increasing the channel's Ca(2+) sensitivity and shifting its voltage dependence of activation towards negative potentials. Activity is also enhanced by 3,5-bis(trifluoromethyl)pyrazole derivative (BTP2). Exhibits pronounced temperature sensitivity, with activities strongly intensifying near physiological temperatures. TRPM4 can adopt distinct conformations at different temperatures, markedly influencing where and how ligands interact with them. Functionally, calcium-activated selective cation channel that mediates membrane depolarization. While it is activated by increase in intracellular Ca(2+), it is impermeable to it. Mediates transport of monovalent cations (Na(+) &gt; K(+) &gt; Cs(+) &gt; Li(+)), leading to depolarize the membrane. It thereby plays a central role in cadiomyocytes, neurons from entorhinal cortex, dorsal root and vomeronasal neurons, endocrine pancreas cells, kidney epithelial cells, cochlea hair cells etc. Participates in T-cell activation by modulating Ca(2+) oscillations after T lymphocyte activation, which is required for NFAT-dependent IL2 production. Involved in myogenic constriction of cerebral arteries. Controls insulin secretion in pancreatic beta-cells. May also be involved in pacemaking or could cause irregular electrical activity under conditions of Ca(2+) overload. Affects T-helper 1 (Th1) and T-helper 2 (Th2) cell motility and cytokine production through differential regulation of calcium signaling and NFATC1 localization. Enhances cell proliferation through up-regulation of the beta-catenin signaling pathway. Plays a role in keratinocyte differentiation. Its function is as follows. Lacks channel activity. This Rattus norvegicus (Rat) protein is Transient receptor potential cation channel subfamily M member 4 (Trpm4).